Reading from the N-terminus, the 579-residue chain is MMAVAAAQKNREMFAIKKSYSIENGYPSRRRSLVDDARFETLVVKQTKQTVLEEARSKANDDSLEDCIVQAQEHIPSEQDVELQDEHANLENLPLEEYVPVEEDVEFESVEQEQSESQSQEPEGNQQPTKNDYGLTEDEILLANAASESSDAEAAMQSAALVVRLKEGISSLGRILKAIETFHGTVQHVESRQSRVEGVDHDVLIKLDMTRGNLLQLIRSLRQSGSFSSMNLMADNNLNVKAPWFPKHASELDNCNHLMTKYEPDLDMNHPGFADKVYRQRRKEIAEIAFAYKYGDPIPFIDYSDVEVKTWRSVFKTVQDLAPKHACAEYRAAFQKLQDEQIFVETRLPQLQEMSDFLRKNTGFSLRPAAGLLTARDFLASLAFRIFQSTQYVRHVNSPYHTPEPDSIHELLGHMPLLADPSFAQFSQEIGLASLGASDEEIEKLSTVYWFTVEFGLCKEHGQIKAYGAGLLSSYGELLHAISDKCEHRAFEPASTAVQPYQDQEYQPIYYVAESFEDAKDKFRRWVSTMSRPFEVRFNPHTERVEVLDSVDKLETLVHQMNTEILHLTNAISKLRRPF.

Over residues Val105–Gln114 the composition is skewed to acidic residues. Residues Val105–Asp132 are disordered. Fe cation contacts are provided by His409, His414, and Glu454.

The protein belongs to the biopterin-dependent aromatic amino acid hydroxylase family. It depends on Fe(2+) as a cofactor.

The protein resides in the cytoplasm. It is found in the perinuclear region. The protein localises to the cell projection. Its subcellular location is the axon. The enzyme catalyses (6R)-L-erythro-5,6,7,8-tetrahydrobiopterin + L-tyrosine + O2 = (4aS,6R)-4a-hydroxy-L-erythro-5,6,7,8-tetrahydrobiopterin + L-dopa. Its pathway is catecholamine biosynthesis; dopamine biosynthesis; dopamine from L-tyrosine: step 1/2. Phosphorylation leads to an increase in the catalytic activity. Its function is as follows. Plays an important role in the physiology of adrenergic neurons. The protein is Tyrosine 3-monooxygenase (ple) of Drosophila melanogaster (Fruit fly).